Here is a 127-residue protein sequence, read N- to C-terminus: D-ribose pyranase (127 aa).

Residue His20 is the Proton donor of the active site. Substrate contacts are provided by residues Asp28, His94, and 116–118; that span reads YSN.

Belongs to the RbsD / FucU family. RbsD subfamily. As to quaternary structure, homodecamer.

The protein localises to the cytoplasm. It catalyses the reaction beta-D-ribopyranose = beta-D-ribofuranose. It participates in carbohydrate metabolism; D-ribose degradation; D-ribose 5-phosphate from beta-D-ribopyranose: step 1/2. Catalyzes the interconversion of beta-pyran and beta-furan forms of D-ribose. This is D-ribose pyranase from Cutibacterium acnes (strain DSM 16379 / KPA171202) (Propionibacterium acnes).